A 416-amino-acid chain; its full sequence is Ribosome biogenesis protein WDR12 homolog (416 aa).

Residues 7–89 (VQVRFFTKQK…ESVVEIEYLE (83 aa)) are ubiquitin-like (UBL) domain. WD repeat units lie at residues 101–138 (VHDDWVSSVSRCKNCIITGSYDNCVQIWDDQGSCLAKV), 140–184 (GHTS…ASCV), 189–228 (GHTQSVDSISINPSATKFCSGSWDKTLKLWSAVVNPEGGD), 259–297 (GHTQAVSSVVWMDRTTICSAGWDHCIRLWDAESGVNKQT), 299–338 (TGSKVFCEIAYSALNQCLASGSADKYIRLWDHRAEDGQVV), 344–384 (SHQG…TPLY), and 388–416 (GHQDKVMCVRWSSSRHLMSGGTDNQLILY). The interval 226–245 (GGDEGENGSLSKKQKTTGVK) is disordered.

It belongs to the WD repeat WDR12/YTM1 family.

The protein resides in the nucleus. Its subcellular location is the nucleolus. It is found in the nucleoplasm. Required for maturation of ribosomal RNAs and formation of the large ribosomal subunit. The chain is Ribosome biogenesis protein WDR12 homolog from Nematostella vectensis (Starlet sea anemone).